The chain runs to 523 residues: Leucine-rich repeat transmembrane neuronal protein 1 (523 aa).

Positions 1-34 (MDFLLLGLCLHWLLRRPSGVVLCLLGACFQMLPA) are cleaved as a signal peptide. The region spanning 35 to 63 (APSGCPGQCRCEGRLLYCEALNLTEAPHN) is the LRRNT domain. The Extracellular segment spans residues 35–428 (APSGCPGQCR…HAENAVQIHK (394 aa)). 2 N-linked (GlcNAc...) asparagine glycosylation sites follow: Asn-56 and Asn-63. 10 LRR repeats span residues 64-87 (LSGLLGLSLRYNSLSELRAGQFTG), 89-111 (MQLTWLYLDHNHICSVQGDAFQK), 112-135 (LRRVKELTLSSNQITELANTTFRP), 136-159 (MPNLRSVDLSYNKLQALAPDLFHG), 161-183 (RKLTTLHMRANAIQFVPVRIFQD), 184-207 (CRSLKFLDIGYNQLKSLARNSFAG), 209-231 (FKLTELHLEHNDLIKVNFAHFPR), 233-255 (ISLNSLCLRRNKVAIVVSSLDWV), 256-278 (WNLEKMDLSGNEIEYMEPHVFET), and 280-302 (PYLQSLQLDSNRLTYIEPRILNS). Residue Asn-130 is glycosylated (N-linked (GlcNAc...) asparagine). The LRRCT domain occupies 314–365 (NLWDCGRNVCALASWLSNFQGRYDANLQCASPEYAQGEDVLDAVYAFHLCED). N-linked (GlcNAc...) asparagine glycosylation occurs at Asn-381. Residues 429–449 (VVTGTMALIFSFLIVVLVLYV) form a helical membrane-spanning segment. Topologically, residues 450–523 (SWKCFPASLR…HQQPARECEV (74 aa)) are cytoplasmic. A May be involved in DLG4-binding motif is present at residues 520-523 (ECEV).

The protein belongs to the LRRTM family. In terms of assembly, interacts with DLG4.

It localises to the cell membrane. The protein resides in the postsynaptic cell membrane. Its function is as follows. Exhibits strong synaptogenic activity, restricted to excitatory presynaptic differentiation, acting at both pre- and postsynaptic level. In Rattus norvegicus (Rat), this protein is Leucine-rich repeat transmembrane neuronal protein 1 (Lrrtm1).